The primary structure comprises 171 residues: Shikimate kinase (171 aa).

14–19 is a binding site for ATP; sequence GAGKST. Ser-18 contributes to the Mg(2+) binding site. Substrate is bound by residues Asp-36, Arg-60, and Gly-82. Arg-120 serves as a coordination point for ATP. Residue Arg-139 participates in substrate binding. Residue Gln-156 participates in ATP binding.

It belongs to the shikimate kinase family. In terms of assembly, monomer. Requires Mg(2+) as cofactor.

It is found in the cytoplasm. The enzyme catalyses shikimate + ATP = 3-phosphoshikimate + ADP + H(+). The protein operates within metabolic intermediate biosynthesis; chorismate biosynthesis; chorismate from D-erythrose 4-phosphate and phosphoenolpyruvate: step 5/7. Its function is as follows. Catalyzes the specific phosphorylation of the 3-hydroxyl group of shikimic acid using ATP as a cosubstrate. The polypeptide is Shikimate kinase (Shewanella amazonensis (strain ATCC BAA-1098 / SB2B)).